We begin with the raw amino-acid sequence, 338 residues long: Ketol-acid reductoisomerase (NADP(+)) (338 aa).

The KARI N-terminal Rossmann domain maps to 1–181 (MNIYYDKDCD…GGGRAGIIET (181 aa)). Residues 24 to 27 (YGSQ), arginine 47, serine 50, serine 52, and 82 to 85 (DEHQ) each bind NADP(+). Residue histidine 107 is part of the active site. Glycine 133 provides a ligand contact to NADP(+). A KARI C-terminal knotted domain is found at 182-327 (AFREETETDL…ERLRSMMPWI (146 aa)). Aspartate 190, glutamate 194, glutamate 226, and glutamate 230 together coordinate Mg(2+). Position 251 (serine 251) interacts with substrate.

It belongs to the ketol-acid reductoisomerase family. Requires Mg(2+) as cofactor.

The enzyme catalyses (2R)-2,3-dihydroxy-3-methylbutanoate + NADP(+) = (2S)-2-acetolactate + NADPH + H(+). It catalyses the reaction (2R,3R)-2,3-dihydroxy-3-methylpentanoate + NADP(+) = (S)-2-ethyl-2-hydroxy-3-oxobutanoate + NADPH + H(+). It participates in amino-acid biosynthesis; L-isoleucine biosynthesis; L-isoleucine from 2-oxobutanoate: step 2/4. Its pathway is amino-acid biosynthesis; L-valine biosynthesis; L-valine from pyruvate: step 2/4. Its function is as follows. Involved in the biosynthesis of branched-chain amino acids (BCAA). Catalyzes an alkyl-migration followed by a ketol-acid reduction of (S)-2-acetolactate (S2AL) to yield (R)-2,3-dihydroxy-isovalerate. In the isomerase reaction, S2AL is rearranged via a Mg-dependent methyl migration to produce 3-hydroxy-3-methyl-2-ketobutyrate (HMKB). In the reductase reaction, this 2-ketoacid undergoes a metal-dependent reduction by NADPH to yield (R)-2,3-dihydroxy-isovalerate. This Nitrosococcus oceani (strain ATCC 19707 / BCRC 17464 / JCM 30415 / NCIMB 11848 / C-107) protein is Ketol-acid reductoisomerase (NADP(+)).